The primary structure comprises 692 residues: Catalase-B (692 aa).

Catalysis depends on residues His69 and Asn142. Tyr356 contributes to the heme binding site.

Belongs to the catalase family. Requires heme as cofactor.

The protein resides in the cytoplasm. It carries out the reaction 2 H2O2 = O2 + 2 H2O. In terms of biological role, occurs in almost all aerobically respiring organisms and serves to protect cells from the toxic effects of hydrogen peroxide. Its accumulation in prespore cells affords the spores protection from oxidation during prolonged dormancy. Required for normal developmental timing, possibly through a regulatory role in differentiation and morphogenesis. In Dictyostelium discoideum (Social amoeba), this protein is Catalase-B (catB).